A 314-amino-acid chain; its full sequence is uncharacterized protein (314 aa).

An N-terminal signal peptide occupies residues 1-26 (MRGRVAGSCAPLGLLLVCLRLPGLFA). Over residues 41–60 (GTNLPQLGQPSLTGPPNSEH) the composition is skewed to polar residues. Disordered regions lie at residues 41 to 65 (GTNLPQLGQPSLTGPPNSEHPQPAL), 77 to 96 (LKLSVPPSDGFPPAGGSAVQ), 147 to 191 (GSGP…GKIL), and 292 to 314 (PPGSSWNTPAGFPNPPSPGLQWG). The segment covering 147–157 (GSGPLPGESSP) has biased composition (low complexity). Over residues 167–177 (SHLHQDSESRR) the composition is skewed to basic and acidic residues. Residues 303 to 314 (FPNPPSPGLQWG) show a composition bias toward pro residues.

In terms of assembly, binds to numerous extracellular matrix proteins. In terms of tissue distribution, taste cell specific.

The protein localises to the secreted. It is found in the extracellular space. It localises to the extracellular matrix. This is an uncharacterized protein from Macaca mulatta (Rhesus macaque).